The following is a 340-amino-acid chain: 4-hydroxy-2-oxovalerate aldolase (340 aa).

Residues 5–255 enclose the Pyruvate carboxyltransferase domain; it reads IVITEVALRD…QTGVDLYKMM (251 aa). 13–14 is a substrate binding site; that stretch reads RD. Residue D14 participates in Mn(2+) binding. Residue H17 is the Proton acceptor of the active site. Substrate contacts are provided by S167 and H194. The Mn(2+) site is built by H194 and H196. Y285 contributes to the substrate binding site.

Belongs to the 4-hydroxy-2-oxovalerate aldolase family.

The catalysed reaction is (S)-4-hydroxy-2-oxopentanoate = acetaldehyde + pyruvate. The sequence is that of 4-hydroxy-2-oxovalerate aldolase from Brevibacillus brevis (strain 47 / JCM 6285 / NBRC 100599).